Here is a 99-residue protein sequence, read N- to C-terminus: Transcriptional regulator WhiB2 (99 aa).

The 58-residue stretch at 33–90 (LCAQTDPEAFFPEKGGSTRDAKRVCAKCEVREQCLKWAIDHDERFGIWGGMSERERRR) folds into the 4Fe-4S Wbl-type domain. Residues cysteine 34, cysteine 57, cysteine 60, and cysteine 66 each coordinate [4Fe-4S] cluster.

It belongs to the WhiB family. Requires [4Fe-4S] cluster as cofactor. In terms of processing, the Fe-S cluster can be nitrosylated by nitric oxide (NO). Post-translationally, upon Fe-S cluster removal intramolecular disulfide bonds are formed.

It localises to the cytoplasm. In terms of biological role, acts as a transcriptional regulator. Probably redox-responsive. The apo- but not holo-form probably binds DNA. The polypeptide is Transcriptional regulator WhiB2 (whiB2) (Bifidobacterium longum (strain NCC 2705)).